The primary structure comprises 62 residues: MSCFPVLFVMMLLASQSVWAFPEPETRIGTARDAESMGVRSAVEECCENPVCKHTSGCPTTG.

An N-terminal signal peptide occupies residues Met-1–Phe-21. The propeptide occupies Pro-22 to Arg-40.

Belongs to the teretoxin A (TA) superfamily. In terms of processing, contains 2 disulfide bonds. As to expression, expressed by the venom duct.

It localises to the secreted. The protein is Teretoxin Tsu1.1 of Terebra subulata (Chocolate spotted auger).